Reading from the N-terminus, the 463-residue chain is tRNA-2-methylthio-N(6)-dimethylallyladenosine synthase (463 aa).

Positions 19–135 constitute an MTTase N-terminal domain; the sequence is GSYWITTFGC…LESLLNQVDS (117 aa). Residues cysteine 28, cysteine 64, cysteine 98, cysteine 170, cysteine 174, and cysteine 177 each contribute to the [4Fe-4S] cluster site. Residues 156-393 form the Radical SAM core domain; that stretch reads RDSSFCGWVN…NSLVENIAKE (238 aa). One can recognise a TRAM domain in the interval 396–463; that stretch reads QRYKNTSQEI…RPFSLTAKLL (68 aa).

It belongs to the methylthiotransferase family. MiaB subfamily. In terms of assembly, monomer. [4Fe-4S] cluster serves as cofactor.

The protein resides in the cytoplasm. It carries out the reaction N(6)-dimethylallyladenosine(37) in tRNA + (sulfur carrier)-SH + AH2 + 2 S-adenosyl-L-methionine = 2-methylsulfanyl-N(6)-dimethylallyladenosine(37) in tRNA + (sulfur carrier)-H + 5'-deoxyadenosine + L-methionine + A + S-adenosyl-L-homocysteine + 2 H(+). Functionally, catalyzes the methylthiolation of N6-(dimethylallyl)adenosine (i(6)A), leading to the formation of 2-methylthio-N6-(dimethylallyl)adenosine (ms(2)i(6)A) at position 37 in tRNAs that read codons beginning with uridine. This is tRNA-2-methylthio-N(6)-dimethylallyladenosine synthase from Prochlorococcus marinus (strain NATL1A).